We begin with the raw amino-acid sequence, 587 residues long: Sulfite reductase [NADPH] hemoprotein beta-component (587 aa).

Residues 1 to 13 (MQSTDNDLSQSPP) show a composition bias toward polar residues. Residues 1–20 (MQSTDNDLSQSPPKLSADEQ) form a disordered region. 4 residues coordinate [4Fe-4S] cluster: C439, C445, C484, and C488. Position 488 (C488) interacts with siroheme.

The protein belongs to the nitrite and sulfite reductase 4Fe-4S domain family. Alpha(8)-beta(8). The alpha component is a flavoprotein, the beta component is a hemoprotein. The cofactor is siroheme. [4Fe-4S] cluster is required as a cofactor.

It catalyses the reaction hydrogen sulfide + 3 NADP(+) + 3 H2O = sulfite + 3 NADPH + 4 H(+). The protein operates within sulfur metabolism; hydrogen sulfide biosynthesis; hydrogen sulfide from sulfite (NADPH route): step 1/1. Its function is as follows. Component of the sulfite reductase complex that catalyzes the 6-electron reduction of sulfite to sulfide. This is one of several activities required for the biosynthesis of L-cysteine from sulfate. The sequence is that of Sulfite reductase [NADPH] hemoprotein beta-component from Bordetella petrii (strain ATCC BAA-461 / DSM 12804 / CCUG 43448).